Consider the following 286-residue polypeptide: ATP synthase gamma chain (286 aa).

The protein belongs to the ATPase gamma chain family. As to quaternary structure, F-type ATPases have 2 components, CF(1) - the catalytic core - and CF(0) - the membrane proton channel. CF(1) has five subunits: alpha(3), beta(3), gamma(1), delta(1), epsilon(1). CF(0) has three main subunits: a, b and c.

It localises to the cell membrane. Functionally, produces ATP from ADP in the presence of a proton gradient across the membrane. The gamma chain is believed to be important in regulating ATPase activity and the flow of protons through the CF(0) complex. The protein is ATP synthase gamma chain of Malacoplasma penetrans (strain HF-2) (Mycoplasma penetrans).